Consider the following 297-residue polypeptide: 3-methyl-2-oxobutanoate hydroxymethyltransferase (297 aa).

Residues 1–15 (MSEQISEQSEQNVYG) show a composition bias toward polar residues. The interval 1–40 (MSEQISEQSEQNVYGASSPVPAGESSPSAASAPRTKVRTH) is disordered. Low complexity predominate over residues 16-33 (ASSPVPAGESSPSAASAP). Positions 78 and 117 each coordinate Mg(2+). Residues 78–79 (DS), aspartate 117, and lysine 147 each bind 3-methyl-2-oxobutanoate. Glutamate 149 serves as a coordination point for Mg(2+). Glutamate 215 serves as the catalytic Proton acceptor.

Belongs to the PanB family. As to quaternary structure, homodecamer; pentamer of dimers. Mg(2+) is required as a cofactor.

The protein resides in the cytoplasm. The catalysed reaction is 3-methyl-2-oxobutanoate + (6R)-5,10-methylene-5,6,7,8-tetrahydrofolate + H2O = 2-dehydropantoate + (6S)-5,6,7,8-tetrahydrofolate. It functions in the pathway cofactor biosynthesis; (R)-pantothenate biosynthesis; (R)-pantoate from 3-methyl-2-oxobutanoate: step 1/2. Functionally, catalyzes the reversible reaction in which hydroxymethyl group from 5,10-methylenetetrahydrofolate is transferred onto alpha-ketoisovalerate to form ketopantoate. The polypeptide is 3-methyl-2-oxobutanoate hydroxymethyltransferase (Mycobacterium marinum (strain ATCC BAA-535 / M)).